Consider the following 26-residue polypeptide: Omega-conotoxin TVIA (26 aa).

Cystine bridges form between cysteine 1-cysteine 16, cysteine 8-cysteine 19, and cysteine 15-cysteine 26. 3 positions are modified to 4-hydroxyproline: proline 4, proline 10, and proline 21.

Belongs to the conotoxin O1 superfamily. As to expression, expressed by the venom duct.

The protein localises to the secreted. In terms of biological role, omega-conotoxins act at presynaptic membranes, they bind and block voltage-gated calcium channels (Cav). The protein is Omega-conotoxin TVIA of Conus tulipa (Fish-hunting cone snail).